Reading from the N-terminus, the 293-residue chain is MNRQSLFILTGLSGSGKSTAMEAFEDAGYYCVDNMPIELLPKFLDLPLDSDTDINGFAFVMDIRAKQFLSQFPSVLESLGKNGHIPEIIFLEADENILLKRYSQTRRHHPAGQDKSLIESIKSEKSLMLPIRKISKRIIDTSNYNVHQLKAEIRNIAHHHALKPVSMKINLLSFGFKYGIPTDADLVVDMRFLSNPFFVPELKALNGRTKEVKDFVLETIQAKTFLKKYLGLLDYLIPLYTLEGKAYLTIAVGCTGGRHRSVAIAENIFEHLSQRGFEPGIIHRDIDRDTKEL.

Residue Gly-11 to Ser-18 coordinates ATP. Asp-62–Ala-65 contributes to the GTP binding site.

The protein belongs to the RapZ-like family.

Displays ATPase and GTPase activities. The sequence is that of Nucleotide-binding protein HRM2_27900 from Desulforapulum autotrophicum (strain ATCC 43914 / DSM 3382 / VKM B-1955 / HRM2) (Desulfobacterium autotrophicum).